The sequence spans 247 residues: NAD-dependent protein deacetylase 2 (247 aa).

A Deacetylase sirtuin-type domain is found at M1–E247. NAD(+) contacts are provided by A23, T27, F34, R35, Q103, I105, D106, and H121. F34 serves as a coordination point for nicotinamide. Nicotinamide is bound by residues I105 and D106. H121 acts as the Proton acceptor in catalysis. Zn(2+) is bound by residues C129, C132, C149, and C152. NAD(+)-binding residues include T188, S189, N215, and I233.

This sequence belongs to the sirtuin family. Class U subfamily. It depends on Zn(2+) as a cofactor.

The protein localises to the cytoplasm. The catalysed reaction is N(6)-acetyl-L-lysyl-[protein] + NAD(+) + H2O = 2''-O-acetyl-ADP-D-ribose + nicotinamide + L-lysyl-[protein]. In terms of biological role, NAD-dependent protein deacetylase which modulates the activities of several enzymes which are inactive in their acetylated form. The sequence is that of NAD-dependent protein deacetylase 2 from Geobacillus kaustophilus (strain HTA426).